We begin with the raw amino-acid sequence, 207 residues long: Small ribosomal subunit protein uS4 (207 aa).

The segment at 22–54 (KSARRSISDKSKFESKPGQHGRTSGSRTSDFGL) is disordered. Over residues 27 to 38 (SISDKSKFESKP) the composition is skewed to basic and acidic residues. Polar residues predominate over residues 42–52 (GRTSGSRTSDF). The S4 RNA-binding domain occupies 97 to 157 (SRLDNVVYRM…EKSKKQLRII (61 aa)).

This sequence belongs to the universal ribosomal protein uS4 family. In terms of assembly, part of the 30S ribosomal subunit. Contacts protein S5. The interaction surface between S4 and S5 is involved in control of translational fidelity.

Its function is as follows. One of the primary rRNA binding proteins, it binds directly to 16S rRNA where it nucleates assembly of the body of the 30S subunit. In terms of biological role, with S5 and S12 plays an important role in translational accuracy. This Leptothrix cholodnii (strain ATCC 51168 / LMG 8142 / SP-6) (Leptothrix discophora (strain SP-6)) protein is Small ribosomal subunit protein uS4.